The following is a 581-amino-acid chain: Proline--tRNA ligase (581 aa).

This sequence belongs to the class-II aminoacyl-tRNA synthetase family. ProS type 1 subfamily. In terms of assembly, homodimer.

The protein resides in the cytoplasm. It catalyses the reaction tRNA(Pro) + L-proline + ATP = L-prolyl-tRNA(Pro) + AMP + diphosphate. Functionally, catalyzes the attachment of proline to tRNA(Pro) in a two-step reaction: proline is first activated by ATP to form Pro-AMP and then transferred to the acceptor end of tRNA(Pro). As ProRS can inadvertently accommodate and process non-cognate amino acids such as alanine and cysteine, to avoid such errors it has two additional distinct editing activities against alanine. One activity is designated as 'pretransfer' editing and involves the tRNA(Pro)-independent hydrolysis of activated Ala-AMP. The other activity is designated 'posttransfer' editing and involves deacylation of mischarged Ala-tRNA(Pro). The misacylated Cys-tRNA(Pro) is not edited by ProRS. In Azoarcus sp. (strain BH72), this protein is Proline--tRNA ligase.